We begin with the raw amino-acid sequence, 191 residues long: Lipid A acyltransferase PagP (191 aa).

The signal sequence occupies residues 1–26; sequence MLKVNKYVILIIAFVSQMMFSTTAQA. Active-site residues include histidine 63, aspartate 106, and serine 107.

This sequence belongs to the lipid A palmitoyltransferase family. As to quaternary structure, homodimer.

Its subcellular location is the cell outer membrane. It catalyses the reaction a lipid A + a 1,2-diacyl-sn-glycero-3-phosphocholine = a hepta-acyl lipid A + a 2-acyl-sn-glycero-3-phosphocholine. It carries out the reaction a lipid IVA + a 1,2-diacyl-sn-glycero-3-phosphocholine = a lipid IVB + a 2-acyl-sn-glycero-3-phosphocholine. The enzyme catalyses a lipid IIA + a 1,2-diacyl-sn-glycero-3-phosphocholine = a lipid IIB + a 2-acyl-sn-glycero-3-phosphocholine. Transfers a fatty acid residue from the sn-1 position of a phospholipid to the N-linked hydroxyfatty acid chain on the proximal unit of lipid A or its precursors. The polypeptide is Lipid A acyltransferase PagP (Enterobacter lignolyticus (strain SCF1)).